The primary structure comprises 621 residues: Glutamyl-tRNA(Gln) amidotransferase subunit E (621 aa).

Belongs to the GatB/GatE family. GatE subfamily. In terms of assembly, heterodimer of GatD and GatE.

The enzyme catalyses L-glutamyl-tRNA(Gln) + L-glutamine + ATP + H2O = L-glutaminyl-tRNA(Gln) + L-glutamate + ADP + phosphate + H(+). Functionally, allows the formation of correctly charged Gln-tRNA(Gln) through the transamidation of misacylated Glu-tRNA(Gln) in organisms which lack glutaminyl-tRNA synthetase. The reaction takes place in the presence of glutamine and ATP through an activated gamma-phospho-Glu-tRNA(Gln). The GatDE system is specific for glutamate and does not act on aspartate. In Methanobrevibacter smithii (strain ATCC 35061 / DSM 861 / OCM 144 / PS), this protein is Glutamyl-tRNA(Gln) amidotransferase subunit E.